A 250-amino-acid polypeptide reads, in one-letter code: ATP synthase subunit a (250 aa).

The next 6 helical transmembrane spans lie at 29–49 (ASLF…FATS), 84–104 (FFPL…LGMF), 114–134 (IIVT…YGFY), 143–163 (VFVP…IEII), 193–213 (FVAS…LPLI), and 216–236 (VALT…FAVL).

It belongs to the ATPase A chain family. As to quaternary structure, F-type ATPases have 2 components, CF(1) - the catalytic core - and CF(0) - the membrane proton channel. CF(1) has five subunits: alpha(3), beta(3), gamma(1), delta(1), epsilon(1). CF(0) has three main subunits: a(1), b(2) and c(9-12). The alpha and beta chains form an alternating ring which encloses part of the gamma chain. CF(1) is attached to CF(0) by a central stalk formed by the gamma and epsilon chains, while a peripheral stalk is formed by the delta and b chains.

It is found in the cell inner membrane. Its function is as follows. Key component of the proton channel; it plays a direct role in the translocation of protons across the membrane. This chain is ATP synthase subunit a, found in Rhizobium leguminosarum bv. trifolii (strain WSM2304).